The following is a 128-amino-acid chain: Small ribosomal subunit protein uS9 (128 aa).

Positions 106-128 (PRVVERKKPGRPKARKRFQFSKR) are disordered. Over residues 113–128 (KPGRPKARKRFQFSKR) the composition is skewed to basic residues.

The protein belongs to the universal ribosomal protein uS9 family.

This chain is Small ribosomal subunit protein uS9, found in Porphyromonas gingivalis (strain ATCC 33277 / DSM 20709 / CIP 103683 / JCM 12257 / NCTC 11834 / 2561).